The primary structure comprises 504 residues: MSALIFLCAILIGFVIYSLISSARRPKNFPPGPRFVPWLGNTLQFRKEASAVGGQHILFERWAKDFRSDLVGLKLGREYVVVALGHEMVKEVQLQEVFEGRPDNFFLRLRTMGTRKGITCTDGQLWYEHRHFAMKQMRNVGYGRSQMEHHIELEAEELLGQLERTEEQPIEPVTWLAQSVLNVLWCLIAGKRIARQEDGTLRRLLDLMNRRSKLFDICGGLLAQFPWLRHVAPDRTGYNLIQQLNTELYGFFMDTIEEHRRQLAKDPSPAESDLIYAYLQEMKDRSAGGESSTFNETQLVMTILDFFIAGSQTTSNTINLALMVLAMRPDVQEKLFSQVTASVAAASTDAFPHLSRREAFDYMDAFIMEVQRFFHITPITGPRRALWATKLGGYDIPKNATILISLRSVHLDKEHWKDPLEFRPERFIDSAGKCFKDEYFMPFGMGRRRCLGDALARACIFSFLVRIVQHFSVVLPAGESPSMVLLPGITLTPKPYKVQFVKRT.

Residue cysteine 450 participates in heme binding.

It belongs to the cytochrome P450 family. Heme serves as cofactor.

It is found in the endoplasmic reticulum membrane. It localises to the microsome membrane. May be involved in the metabolism of insect hormones and in the breakdown of synthetic insecticides. This is Probable cytochrome P450 305a1 (Cyp305a1) from Drosophila melanogaster (Fruit fly).